Consider the following 1063-residue polypeptide: Integrin alpha-8 (1063 aa).

The signal sequence occupies residues 1 to 38; it reads MSPGASRGPRGSQAPLIAPLCCAAAALGMLLWSPACQA. The Extracellular segment spans residues 39–1012; the sequence is FNLDVEKLTV…TPNVSFSIPL (974 aa). FG-GAP repeat units lie at residues 44–105, 122–183, 188–240, 253–306, 307–372, 373–431, and 435–498; these read EKLT…GSAQ, NGTK…AYAE, RNSN…IANY, KQTE…STDM, TFIQ…LLFR, DPQI…GLNT, and QVLQ…LHPM. N-linked (GlcNAc...) asparagine glycosylation is present at asparagine 81. A disulfide bridge connects residues cysteine 96 and cysteine 106. Asparagine 122 carries N-linked (GlcNAc...) asparagine glycosylation. A disulfide bridge links cysteine 150 with cysteine 171. Asparagine 177 carries an N-linked (GlcNAc...) asparagine glycan. Cysteines 187 and 200 form a disulfide. Asparagine 239 is a glycosylation site (N-linked (GlcNAc...) asparagine). The Ca(2+) site is built by glutamate 275, threonine 277, aspartate 279, and glutamate 283. N-linked (GlcNAc...) asparagine glycosylation is found at asparagine 302 and asparagine 311. 10 residues coordinate Ca(2+): aspartate 329, asparagine 331, aspartate 333, leucine 335, aspartate 337, aspartate 395, asparagine 397, aspartate 399, tyrosine 401, and aspartate 403. The Cell attachment site signature appears at 455-457; the sequence is RGD. Residues aspartate 459, aspartate 461, asparagine 463, tyrosine 465, and aspartate 467 each contribute to the Ca(2+) site. The N-linked (GlcNAc...) asparagine glycan is linked to asparagine 504. Disulfide bonds link cysteine 507–cysteine 518 and cysteine 524–cysteine 580. N-linked (GlcNAc...) asparagine glycans are attached at residues asparagine 601 and asparagine 605. 2 disulfide bridges follow: cysteine 641/cysteine 647 and cysteine 713/cysteine 726. 6 N-linked (GlcNAc...) asparagine glycosylation sites follow: asparagine 719, asparagine 737, asparagine 753, asparagine 780, asparagine 896, and asparagine 923. 2 cysteine pairs are disulfide-bonded: cysteine 867/cysteine 924 and cysteine 929/cysteine 934. Asparagine 1005 carries an N-linked (GlcNAc...) asparagine glycan. A helical membrane pass occupies residues 1013–1033; sequence WVIILAILLGLLVLAILTLAL. Residues 1034–1063 are Cytoplasmic-facing; the sequence is WKCGFFDRARPPQEDMTDREQLTNDKTPEA.

Belongs to the integrin alpha chain family. Heterodimer of an alpha and a beta subunit. The alpha subunit is composed of a heavy and a light chain linked by a disulfide bond. Alpha-8 associates with beta-1. As to expression, expressed in mesenchymal cells, including alveolar myofibroblasts, kidney mesangial cells and hepatic stellar cells and vascular and visceral smooth muscle (at protein level).

Its subcellular location is the membrane. It is found in the cell membrane. In terms of biological role, integrin alpha-8/beta-1 functions in the genesis of kidney and probably of other organs by regulating the recruitment of mesenchymal cells into epithelial structures. It recognizes the sequence R-G-D in a wide array of ligands including TNC, FN1, SPP1 TGFB1, TGFB3 and VTN. NPNT is probably its functional ligand in kidney genesis. Neuronal receptor for TNC it mediates cell-cell interactions and regulates neurite outgrowth of sensory and motor neurons. In Homo sapiens (Human), this protein is Integrin alpha-8 (ITGA8).